A 126-amino-acid polypeptide reads, in one-letter code: Anti-adapter protein IraD (126 aa).

It belongs to the GpW/Gp25 family. IraD subfamily. As to quaternary structure, interacts with RssB.

The protein resides in the cytoplasm. Inhibits RpoS proteolysis by regulating RssB activity, thereby increasing the stability of the sigma stress factor RpoS during oxidative stress. Its effect on RpoS stability is due to its interaction with RssB, which probably blocks the interaction of RssB with RpoS, and the consequent delivery of the RssB-RpoS complex to the ClpXP protein degradation pathway. The sequence is that of Anti-adapter protein IraD from Salmonella paratyphi A (strain ATCC 9150 / SARB42).